Reading from the N-terminus, the 461-residue chain is General transcription and DNA repair factor IIH subunit SSL1 (461 aa).

Positions 1–70 (MAPVVISESE…RLSNRNLQGS (70 aa)) are disordered. Residues 26-37 (VHFDGEGDDRVD) are compositionally biased toward basic and acidic residues. The segment covering 53-63 (HVQRKKKKRLS) has biased composition (basic residues). One can recognise a VWFA domain in the interval 125–304 (SLILTLDCSE…THLKELFNEA (180 aa)). The C4-type zinc finger occupies 349–366 (CPNCHSKVCSLPTVCPCC).

It belongs to the GTF2H2 family. In terms of assembly, component of the 7-subunit TFIIH core complex composed of XPB/SSL2, XPD/RAD3, SSL1, TFB1, TFB2, TFB4 and TFB5, which is active in NER. The core complex associates with the 3-subunit CTD-kinase module TFIIK composed of CCL1, KIN28 and TFB3 to form the 10-subunit holoenzyme (holo-TFIIH) active in transcription. An additionnal subunit, TFB6, plays a role in the dissociation of the SSL2 helicase from TFIIH after transcription initiation.

Its subcellular location is the nucleus. Component of the general transcription and DNA repair factor IIH (TFIIH) core complex, which is involved in general and transcription-coupled nucleotide excision repair (NER) of damaged DNA and, when complexed to TFIIK, in RNA transcription by RNA polymerase II. In NER, TFIIH acts by opening DNA around the lesion to allow the excision of the damaged oligonucleotide and its replacement by a new DNA fragment. In transcription, TFIIH has an essential role in transcription initiation. When the pre-initiation complex (PIC) has been established, TFIIH is required for promoter opening and promoter escape. Phosphorylation of the C-terminal tail (CTD) of the largest subunit of RNA polymerase II by the kinase module TFIIK controls the initiation of transcription. The polypeptide is General transcription and DNA repair factor IIH subunit SSL1 (SSL1) (Saccharomyces cerevisiae (strain ATCC 204508 / S288c) (Baker's yeast)).